Here is a 520-residue protein sequence, read N- to C-terminus: Probable cytochrome P450 6v1 (520 aa).

Cys-465 lines the heme pocket.

Belongs to the cytochrome P450 family. Requires heme as cofactor.

The protein localises to the endoplasmic reticulum membrane. The protein resides in the microsome membrane. In terms of biological role, may be involved in the metabolism of insect hormones and in the breakdown of synthetic insecticides. The polypeptide is Probable cytochrome P450 6v1 (Cyp6v1) (Drosophila melanogaster (Fruit fly)).